Here is a 367-residue protein sequence, read N- to C-terminus: MEGILCASPGCGKPAKLQCPTCVNLKLETPSHFCSQECFKTFWPLHKMYHQKGQPENLPSQFRNYKFTGPLRPTNITPMRKAPEGIELPDYAIGSIPISERVADRKNMANIIHTPEEIEIMRQLGKMSREVLDIAGNAAKVGMTTEELDIIVHNAVIERGAYPSPLNYYKFPKSCCTSLNEVICHGIPDERPLRDGDILNVDVTLYWKGFHSDLNETYLIGNVDERGKNLVKCAYDCLELAVAMCKPGTLYRELGDAIQKHANKQGFSVVKNFCGHGIGRLFHCNPTVPHYSKNKAVGAMKVGHVFTIEPMINEGTWQDEIWPDSWTAVTADGKRSAQFEHTLVITETGCEVLTKRTNGSYIDRHFK.

A C6H2-type zinc finger spans residues 3 to 57 (GILCASPGCGKPAKLQCPTCVNLKLETPSHFCSQECFKTFWPLHKMYHQKGQPEN). Zn(2+) is bound by residues C6, C11, C19, C22, C34, C38, H46, and H50. H185 lines the a protein pocket. The Zn(2+) site is built by D202, D213, and H276. H283 contributes to the a protein binding site. Residues E309 and E340 each contribute to the Zn(2+) site.

This sequence belongs to the peptidase M24A family. Methionine aminopeptidase type 1 subfamily. Associates with the 60S ribosomal subunit of the 80S translational complex. Zn(2+) serves as cofactor. It depends on Co(2+) as a cofactor. The cofactor is Mn(2+). Requires Fe(2+) as cofactor.

Its subcellular location is the cytoplasm. The enzyme catalyses Release of N-terminal amino acids, preferentially methionine, from peptides and arylamides.. Cotranslationally removes the N-terminal methionine from nascent proteins. The N-terminal methionine is often cleaved when the second residue in the primary sequence is small and uncharged (Met-Ala-, Cys, Gly, Pro, Ser, Thr, or Val). This Dictyostelium discoideum (Social amoeba) protein is Methionine aminopeptidase 1 (metap1).